Reading from the N-terminus, the 574-residue chain is ATP-dependent lipid A-core flippase (574 aa).

4 consecutive transmembrane segments (helical) span residues 11-31 (LLSY…GFGI), 60-80 (WFPL…FMGG), 156-176 (YTNW…GVLV), and 244-264 (LNSP…VWLA). The region spanning 23–304 (LLVLVGFGIN…LTDVNEKLQR (282 aa)) is the ABC transmembrane type-1 domain. The region spanning 335 to 570 (VRFDHVTLEY…QGAYFQLHQR (236 aa)) is the ABC transporter domain. Residue 368–375 (GRSGAGKT) coordinates ATP.

The protein belongs to the ABC transporter superfamily. Lipid exporter (TC 3.A.1.106) family. As to quaternary structure, homodimer.

The protein localises to the cell inner membrane. The catalysed reaction is ATP + H2O + lipid A-core oligosaccharideSide 1 = ADP + phosphate + lipid A-core oligosaccharideSide 2.. Involved in lipopolysaccharide (LPS) biosynthesis. Translocates lipid A-core from the inner to the outer leaflet of the inner membrane. Transmembrane domains (TMD) form a pore in the inner membrane and the ATP-binding domain (NBD) is responsible for energy generation. This is ATP-dependent lipid A-core flippase from Acinetobacter baylyi (strain ATCC 33305 / BD413 / ADP1).